Here is a 552-residue protein sequence, read N- to C-terminus: Hyaluronan synthase 2 (552 aa).

The Cytoplasmic portion of the chain corresponds to 1 to 11 (MYCERFICILR). Residues 12–32 (ILGTTLFGVSLLLGITAAYIV) form a helical membrane-spanning segment. The Extracellular portion of the chain corresponds to 33 to 45 (GYQFIQTDNYYFS). The chain crosses the membrane as a helical span at residues 46-66 (FGLYGAILASHLIIQSLFAYL). Residues 67–374 (EHRKMKRSLE…NAMWFHKHHL (308 aa)) are Cytoplasmic-facing. The helical transmembrane segment at 375-395 (WMTYEAVITGFFPFFLIATVI) threads the bilayer. Over 396–402 (QLFYRGK) the chain is Extracellular. The helical transmembrane segment at 403-423 (IWNILLFLLTVQLVGLIKSSF) threads the bilayer. The Cytoplasmic portion of the chain corresponds to 424-429 (ASFLRG). Residues 430–450 (NIVMVFMSLYSVLYMSSLLPA) form a helical membrane-spanning segment. Residues 451 to 475 (KMFAIATINKAGWGTSGRKTIVVNF) are Extracellular-facing. Residues 476–496 (IGLIPVSIWFTILLGRVIFTI) form a helical membrane-spanning segment. Residues 497–510 (YKESKKPFSESKTT) are Cytoplasmic-facing. The chain crosses the membrane as a helical span at residues 511–531 (VLVIGTILYACYWVLLLTLYL). The Extracellular segment spans residues 532–552 (VLITKCGRRKKEQHYDMVLDV).

This sequence belongs to the NodC/HAS family. Homodimer; dimerization promotes enzymatic activity. Mg(2+) is required as a cofactor.

Its subcellular location is the cell membrane. It localises to the endoplasmic reticulum membrane. The protein localises to the vesicle. The protein resides in the golgi apparatus membrane. It is found in the lysosome. The enzyme catalyses [hyaluronan](n) + UDP-N-acetyl-alpha-D-glucosamine = N-acetyl-beta-D-glucosaminyl-(1-&gt;4)-[hyaluronan](n) + UDP + H(+). It catalyses the reaction N-acetyl-beta-D-glucosaminyl-(1-&gt;4)-[hyaluronan](n) + UDP-alpha-D-glucuronate = [hyaluronan](n+1) + UDP + H(+). It participates in glycan biosynthesis; hyaluronan biosynthesis. In terms of biological role, catalyzes the addition of GlcNAc or GlcUA monosaccharides to the nascent hyaluronan polymer. Therefore, it is essential to hyaluronan synthesis a major component of most extracellular matrices that has a structural role in tissues architectures and regulates cell adhesion, migration and differentiation. This is one of three isoenzymes responsible for cellular hyaluronan synthesis and it is particularly responsible for the synthesis of high molecular mass hyaluronan. The protein is Hyaluronan synthase 2 (HAS2) of Gallus gallus (Chicken).